Consider the following 296-residue polypeptide: 4-hydroxybenzoate octaprenyltransferase (296 aa).

Transmembrane regions (helical) follow at residues 28-48 (PIGIYLLLWPTLSAVWIAGNG), 52-72 (LANVLIFGLGVVLMRAAGCCI), 102-122 (ALALFAMLVGVSFLLVLCTNS), 145-167 (TYYPQVVLGAAYSWGIPMAFTAA), 174-196 (SAWLLYIANLLWTVGYDTYYAMV), 219-239 (NIILTLQLLSLGCLLLAGSRF), 241-261 (LGGWFHLGLLGAAACFAWEYW), and 275-295 (FLHNHWAGLLVFIGVVLDYAF).

Belongs to the UbiA prenyltransferase family. Requires Mg(2+) as cofactor.

It is found in the cell inner membrane. The catalysed reaction is all-trans-octaprenyl diphosphate + 4-hydroxybenzoate = 4-hydroxy-3-(all-trans-octaprenyl)benzoate + diphosphate. The protein operates within cofactor biosynthesis; ubiquinone biosynthesis. Functionally, catalyzes the prenylation of para-hydroxybenzoate (PHB) with an all-trans polyprenyl group. Mediates the second step in the final reaction sequence of ubiquinone-8 (UQ-8) biosynthesis, which is the condensation of the polyisoprenoid side chain with PHB, generating the first membrane-bound Q intermediate 3-octaprenyl-4-hydroxybenzoate. In Pseudomonas putida (strain GB-1), this protein is 4-hydroxybenzoate octaprenyltransferase.